A 476-amino-acid chain; its full sequence is NADH-quinone oxidoreductase subunit N (476 aa).

Transmembrane regions (helical) follow at residues 8 to 28 (ITTE…GLLV), 35 to 55 (GLGS…IINW), 71 to 91 (YATF…LGSF), 102 to 122 (FEYY…ASAG), 124 to 144 (FITL…LVAF), 159 to 179 (ILLA…VYGA), 201 to 221 (LIVG…AVPF), 239 to 259 (FLAV…FAGG), 267 to 287 (WTLL…LVAI), 295 to 315 (MLAY…VSAT), 322 to 342 (VMFY…VVAI), 366 to 386 (ASVM…AGFV), 405 to 425 (LGLI…LVMF), and 437 to 457 (VGGA…ILGI).

It belongs to the complex I subunit 2 family. As to quaternary structure, NDH-1 is composed of 14 different subunits. Subunits NuoA, H, J, K, L, M, N constitute the membrane sector of the complex.

It localises to the cell membrane. It catalyses the reaction a quinone + NADH + 5 H(+)(in) = a quinol + NAD(+) + 4 H(+)(out). NDH-1 shuttles electrons from NADH, via FMN and iron-sulfur (Fe-S) centers, to quinones in the respiratory chain. The immediate electron acceptor for the enzyme in this species is believed to be a menaquinone. Couples the redox reaction to proton translocation (for every two electrons transferred, four hydrogen ions are translocated across the cytoplasmic membrane), and thus conserves the redox energy in a proton gradient. The chain is NADH-quinone oxidoreductase subunit N from Desulforamulus reducens (strain ATCC BAA-1160 / DSM 100696 / MI-1) (Desulfotomaculum reducens).